The chain runs to 122 residues: Large ribosomal subunit protein uL14c (122 aa).

The protein belongs to the universal ribosomal protein uL14 family. In terms of assembly, part of the 50S ribosomal subunit.

The protein localises to the plastid. It localises to the chloroplast. In terms of biological role, binds to 23S rRNA. The polypeptide is Large ribosomal subunit protein uL14c (Pyropia yezoensis (Susabi-nori)).